A 478-amino-acid polypeptide reads, in one-letter code: uncharacterized protein (478 aa).

In terms of domain architecture, RCK N-terminal spans 2-120; sequence MNMITVIGFG…NIDKIINILE (119 aa).

This is an uncharacterized protein from Methanocaldococcus jannaschii (strain ATCC 43067 / DSM 2661 / JAL-1 / JCM 10045 / NBRC 100440) (Methanococcus jannaschii).